The chain runs to 211 residues: Large ribosomal subunit protein uL4 (211 aa).

A compositionally biased stretch (polar residues) spans 46-55; sequence GNHATKTRSM. A disordered region spans residues 46 to 89; sequence GNHATKTRSMVSGGGKKPWSQKGTGRARQGSTRAPHWVGGGTVH.

It belongs to the universal ribosomal protein uL4 family. Part of the 50S ribosomal subunit.

In terms of biological role, one of the primary rRNA binding proteins, this protein initially binds near the 5'-end of the 23S rRNA. It is important during the early stages of 50S assembly. It makes multiple contacts with different domains of the 23S rRNA in the assembled 50S subunit and ribosome. Forms part of the polypeptide exit tunnel. This Leptospira interrogans serogroup Icterohaemorrhagiae serovar copenhageni (strain Fiocruz L1-130) protein is Large ribosomal subunit protein uL4.